The following is a 580-amino-acid chain: Frizzled and smoothened-like protein K (580 aa).

Residues 1–18 (MRVLFILFLFYFYTYTEA) form the signal peptide. Residues 19 to 236 (QQYYPIDPTG…QWDNIFDTSD (218 aa)) are Extracellular-facing. Residues 25 to 154 (DPTGKCEQYI…SSDYNLTTYG (130 aa)) form the FZ domain. Asn52, Asn97, Asn149, Asn170, and Asn186 each carry an N-linked (GlcNAc...) asparagine glycan. Residues 237–257 (AISLVSLLCSVYLFITYMVIN) traverse the membrane as a helical segment. The Cytoplasmic segment spans residues 258 to 264 (PKRNKYD). A helical transmembrane segment spans residues 265-285 (YFFSFFVLSIILMSIAGTIGF). Topologically, residues 286–308 (SVGGTRKLLCPEINRRGVYTDPA) are extracellular. Residues 309 to 329 (VAAAGWIFQFAIINAILWFSI) traverse the membrane as a helical segment. Topologically, residues 330-349 (NSFELWFQIKFIKRKLHLIK) are cytoplasmic. A helical membrane pass occupies residues 350–370 (FYILAVLVISIALSVPLSAIG). At 371-391 (EFNAGLGNFVVWIESGKYQNW) the chain is on the extracellular side. Residues 392–412 (FFWGPLGIVLTVGTTFIGLVI) traverse the membrane as a helical segment. Residues 413–434 (WEIYKIVSSTNKSDFFKLQLKP) are Cytoplasmic-facing. The helical transmembrane segment at 435–455 (LMNMLLIYLTFVYLFGYNFYI) threads the bilayer. The Extracellular portion of the chain corresponds to 456–490 (HNSLNGFYGSSEEFKNCIISTDGKDCRIQGPPYSS). Residues 491 to 511 (ILMFVFCLRIYGVYCIALYGF) form a helical membrane-spanning segment. At 512 to 580 (SPKTRSIWSN…SMEPDEIILR (69 aa)) the chain is on the cytoplasmic side. The short motif at 514 to 519 (KTRSIW) is the Lys-Thr-X-X-X-Trp motif, mediates interaction with the PDZ domain of Dvl family members element. Positions 542–580 (TTKGGTSSTDIKMSTNNNSNMDSGGGKSSSMEPDEIILR) are disordered. Residues 551 to 563 (DIKMSTNNNSNMD) are compositionally biased toward polar residues.

Belongs to the G-protein coupled receptor Fz/Smo family.

The protein localises to the membrane. The chain is Frizzled and smoothened-like protein K (fslK) from Dictyostelium discoideum (Social amoeba).